Reading from the N-terminus, the 475-residue chain is B-type cell cycle switch protein ccs52A (475 aa).

The segment at 1–29 (MDGTGNRNPPPTSTVGDNSPPPEPSPESL) is disordered. Residues 7-28 (RNPPPTSTVGDNSPPPEPSPES) carry the PEST motif motif. Phosphoserine is present on residues Ser-43 and Ser-45. The C-box signature appears at 51–57 (DRFIPSR). Residues 80-91 (AYTTLLRTALFG) carry the CSM motif motif. Phosphothreonine is present on Thr-99. A phosphoserine mark is found at Ser-144 and Ser-155. WD repeat units lie at residues 166–203 (QDDFYLNLVDWSSHNVLAVGLGNCVYLWNACSSKVTKL), 207–246 (GVDDCVCSVGWAQRGTHLAVGTNNGKVQIWDAARCKKIRS), 249–289 (GHRL…SKLS), 290–329 (GHKSEVCGLKWSYDNRELASGGNDNKLFVWNQHSTQPVLK), 332–374 (EHTA…HLSC), 376–417 (DTGS…KLAT), and 420–459 (GHTYRVLYLAISPDGQTIVTGAGDETLRFWNVFPSPKSQN). Ser-454 bears the Phosphoserine mark.

The protein belongs to the WD repeat CDC20/Fizzy family. As to expression, mostly expressed in nodules, and, to a lower extent, in root tips, stems, hypocotyls, leaves, flower buds and flowers.

It is found in the nucleus. The protein operates within protein modification; protein ubiquitination. Component of the anaphase promoting complex/cyclosome (APC/C), a cell cycle-regulated E3 ubiquitin-protein ligase complex that controls progression through mitosis and the G1 phase of the cell cycle. Required to switch form cell proliferation to cell differentiation, endoreduplication and ploidy-dependent cell enlargement, including during nodulation, before nodule differentiation. Involved in root-knot nematode Meloidogyne incognita giant cells formation. The protein is B-type cell cycle switch protein ccs52A of Medicago truncatula (Barrel medic).